The following is a 157-amino-acid chain: Regulator of Ty1 transposition protein 102 (157 aa).

The residue at position 77 (serine 77) is a Phosphoserine. Residues serine 95–asparagine 157 are disordered. Residues leucine 96 to glutamine 116 show a composition bias toward polar residues. Phosphoserine is present on serine 122. Residues asparagine 147 to asparagine 157 are compositionally biased toward basic and acidic residues.

As to quaternary structure, interacts with STH1 and SWI3. Component of the two forms of the RSC complex composed of at least either RSC1 or RSC2, and ARP7, ARP9, LDB7, NPL6, RSC3, RSC30, RSC4, RSC58, RSC6, RSC8, RSC9, SFH1, STH1, HTL1 and probably RTT102. The complexes interact with histone and histone variant components of centromeric chromatin. Probable additional component of the SWI/SNF global transcription activator complex. The 1.14 MDa SWI/SNF complex is composed of 11 different subunits: one copy each of SWI1, SNF2/SWI2, SNF5, SNF12/SWP73, ARP7/SWP61, ARP9/SWP59; two copies each of SWI3, SNF6, SNF11, SWP82; and three copies of TAF14/SWP29.

It localises to the nucleus. Its function is as follows. Probable component of the chromatin structure-remodeling complex (RSC) which is involved in transcription regulation and nucleosome positioning. RSC is responsible for the transfer of a histone octamer from a nucleosome core particle to naked DNA. The reaction requires ATP and involves an activated RSC-nucleosome intermediate. Remodeling reaction also involves DNA translocation, DNA twist and conformational change. As a reconfigurer of centromeric and flanking nucleosomes, RSC complex is required both for proper kinetochore function in chromosome segregation and, via a PKC1-dependent signaling pathway, for organization of the cellular cytoskeleton. Probable component of the SWI/SNF complex, an ATP-dependent chromatin-remodeling complex, is required for the positive and negative regulation of gene expression of a large number of genes. It changes chromatin structure by altering DNA-histone contacts within a nucleosome, leading eventually to a change in nucleosome position, thus facilitating or repressing binding of gene-specific transcription factors. This Saccharomyces cerevisiae (strain ATCC 204508 / S288c) (Baker's yeast) protein is Regulator of Ty1 transposition protein 102 (RTT102).